The following is a 369-amino-acid chain: Saccharopine dehydrogenase [NAD(+), L-lysine-forming] (369 aa).

L-saccharopine-binding residues include Arg-19 and Lys-78. Lys-78 acts as the Proton acceptor in catalysis. His-96 serves as the catalytic Proton donor. L-saccharopine is bound at residue Gln-101. Position 130 (Arg-130) interacts with NAD(+). Residues Arg-131 and Phe-135 each contribute to the L-saccharopine site. Residues 203–204, Asp-227, Thr-231, Tyr-251, and Val-278 each bind NAD(+); that span reads GR. Cysteines 205 and 249 form a disulfide. 279–281 contacts L-saccharopine; it reads SAD. 318–321 is an NAD(+) binding site; that stretch reads IDHL.

Belongs to the AlaDH/PNT family. Monomer.

It carries out the reaction L-saccharopine + NAD(+) + H2O = L-lysine + 2-oxoglutarate + NADH + H(+). It functions in the pathway amino-acid biosynthesis; L-lysine biosynthesis via AAA pathway; L-lysine from L-alpha-aminoadipate (fungal route): step 3/3. In terms of biological role, catalyzes the NAD(+)-dependent cleavage of saccharopine to L-lysine and 2-oxoglutarate, the final step in the alpha-aminoadipate (AAA) pathway for lysin biosynthesis. This chain is Saccharopine dehydrogenase [NAD(+), L-lysine-forming], found in Yarrowia lipolytica (strain CLIB 122 / E 150) (Yeast).